The primary structure comprises 3082 residues: Autotransporter adhesin BadA (3082 aa).

An N-terminal signal peptide occupies residues 1-47; that stretch reads MKKLSVTSKRQYNLYASPISRRLSLLMKLSLETVTVMFLLGASPVLA. A binds to host cells region spans residues 48–376; that stretch reads SNLALTGAKN…DAVNVAQLKA (329 aa). The surface exposed passenger domain stretch occupies residues 48–2901; it reads SNLALTGAKN…KVQDIATVAD (2854 aa). The interval 53–2850 is does not bind host cells, no host proangiogenic cytokine induction, collagen or fibronectin, no autoagglutination; it reads TGAKNLSQNS…DARHNGVDSK (2798 aa). Residues 470 to 2850 form a required to bind fibronectin, not required for surface expression on bacteria, bacterial autoagglutination, host cell binding, collagen binding or host proangiogenic cytokine induction region; sequence ITGVAEGTDA…DARHNGVDSK (2381 aa). The segment at 2902–3027 is outer membrane translocation of the passenger domain; that stretch reads SAVKYEKDST…VSNLRYYDIP (126 aa). 4 beta stranded membrane passes run 3028–3039, 3044–3051, 3055–3065, and 3070–3082; these read GSLSLSFGTGIW, AFAIGAGY, DGNIRSNLSIT, and QWGV…LRLK. Positions 3028-3082 are translocator domain; that stretch reads GSLSLSFGTGIWRSQSAFAIGAGYTSEDGNIRSNLSITSSGGQWGVGAGITLRLK.

It belongs to the autotransporter-2 (AT-2) (TC 1.B.40) family. As to quaternary structure, homotrimer. Crystals of the head region form trimers.

The protein resides in the cell surface. It is found in the cell outer membrane. Mediates bacterial adherence to host endothelial cells and host extracellular matrix proteins (collagen type I, III, IV, laminin and fibronectin). Static versus dynamic adherence results differ slightly; in dynamic adherence studies bacteria bind to fixed components under a constant defined flow rate to simulate in vivo infection conditions. Induces secretion of host proangiogenic cytokines such as VEGFA, ADM, IGFBP-3 and IL-8. May prevent bacterial phagocytosis by macrophages. Probably mediates bacterial autoagglutination. Negatively impacts type IV secretion system effectors (VirB/D4 T4SS and its substrate Bep proteins), possibly by preventing close association of host and bacterial cells. This implies the 2 factors are expressed at different times during infection. This chain is Autotransporter adhesin BadA, found in Bartonella henselae (Rochalimaea henselae).